The chain runs to 942 residues: Protein FAM184B (942 aa).

2 disordered regions span residues 1-26 (MASA…RGGS) and 73-97 (QEDL…TSED). Coiled coils occupy residues 89 to 150 (QEQS…RVLI), 196 to 337 (EMHQ…DRLM), and 387 to 495 (SETQ…SLLE). Residues 486–542 (STKLQNSLLEDPCSRPKKPARDEGLEKLTDEEESSSDEEERTGESVKGKSDLQPPFE) are disordered. The segment covering 504-513 (PARDEGLEKL) has biased composition (basic and acidic residues). Over residues 514 to 526 (TDEEESSSDEEER) the composition is skewed to acidic residues. Coiled coils occupy residues 575-619 (NKDS…ESLR) and 686-815 (EKGL…ERRF). The disordered stretch occupies residues 880 to 934 (APPITKSPSLDPSPSCSQPYKPTQLLDGKTASRTQDGEPAQPKEAPQKQGSPHQE). The span at 885–900 (KSPSLDPSPSCSQPYK) shows a compositional bias: polar residues.

This sequence belongs to the FAM184 family.

In Mus musculus (Mouse), this protein is Protein FAM184B (Fam184b).